The chain runs to 197 residues: dCTP deaminase, dUMP-forming (197 aa).

DCTP is bound by residues Arg-105–Arg-110, Asp-123, Thr-131–Glu-133, Gln-152, Tyr-166, Lys-174, and Gln-178. Glu-133 (proton donor/acceptor) is an active-site residue.

Belongs to the dCTP deaminase family. As to quaternary structure, homotrimer.

It catalyses the reaction dCTP + 2 H2O = dUMP + NH4(+) + diphosphate. It functions in the pathway pyrimidine metabolism; dUMP biosynthesis; dUMP from dCTP: step 1/1. Its function is as follows. Bifunctional enzyme that catalyzes both the deamination of dCTP to dUTP and the hydrolysis of dUTP to dUMP without releasing the toxic dUTP intermediate. The polypeptide is dCTP deaminase, dUMP-forming (Methanosphaera stadtmanae (strain ATCC 43021 / DSM 3091 / JCM 11832 / MCB-3)).